A 255-amino-acid chain; its full sequence is EEF1A lysine methyltransferase 4 (255 aa).

Trp26 and Tyr30 together coordinate S-adenosyl-L-methionine. Tyr39 carries the post-translational modification Phosphotyrosine. S-adenosyl-L-methionine contacts are provided by residues Trp41, Gly66, Asp88–Tyr89, Asp113–Val114, and Lys130. The short motif at Glu129–Asp134 is the Required for methyltransferase activity element.

Belongs to the methyltransferase superfamily.

It catalyses the reaction L-lysyl-[protein] + S-adenosyl-L-methionine = N(6)-methyl-L-lysyl-[protein] + S-adenosyl-L-homocysteine + H(+). The catalysed reaction is N(6)-methyl-L-lysyl-[protein] + S-adenosyl-L-methionine = N(6),N(6)-dimethyl-L-lysyl-[protein] + S-adenosyl-L-homocysteine + H(+). The enzyme catalyses N(6),N(6)-dimethyl-L-lysyl-[protein] + S-adenosyl-L-methionine = N(6),N(6),N(6)-trimethyl-L-lysyl-[protein] + S-adenosyl-L-homocysteine + H(+). Protein-lysine methyltransferase that efficiently catalyzes three successive methylations on 'Lys-36' in eukaryotic translation elongation factor 1 alpha (EEF1A1 or EEF1A2). This is EEF1A lysine methyltransferase 4 from Bos taurus (Bovine).